The following is a 459-amino-acid chain: Nuclear hormone receptor family member nhr-11 (459 aa).

The nuclear receptor DNA-binding region spans 2 to 81 (GPLCAVCESP…AGMRSELVRS (80 aa)). 2 consecutive NR C4-type zinc fingers follow at residues 5–26 (CAVC…CKAC) and 42–69 (CAAD…LRKC). Disordered stretches follow at residues 90 to 119 (RRKD…EEMD) and 134 to 162 (DLPL…SSFD). A compositionally biased stretch (low complexity) spans 97-115 (NSDAAPNSNSPSTRQSSSP). The NR LBD domain occupies 188–458 (ENNSILQYYH…SMLHEMLNFQ (271 aa)).

It belongs to the nuclear hormone receptor family.

It is found in the nucleus. In terms of biological role, orphan nuclear receptor. The sequence is that of Nuclear hormone receptor family member nhr-11 (nhr-11) from Caenorhabditis elegans.